A 212-amino-acid polypeptide reads, in one-letter code: Ras-related protein Rab-21 (212 aa).

Residues 14–21, 62–66, and 120–123 contribute to the GTP site; these read GEGCVGKT, DTAGQ, and NKCD. The interval 181–212 is disordered; it reads TNTTGQTTNRSERIPIVPDSDSGNKQPGCCSN. Polar residues predominate over residues 201 to 212; sequence DSGNKQPGCCSN. S-geranylgeranyl cysteine attachment occurs at residues cysteine 209 and cysteine 210.

It belongs to the small GTPase superfamily. Rab family. In terms of assembly, interacts with LIM domain proteins limF and ChLim.

It is found in the cell membrane. Its function is as follows. Involved in the regulation of phagocytosis. This Dictyostelium discoideum (Social amoeba) protein is Ras-related protein Rab-21 (rab21).